The sequence spans 688 residues: Pentatricopeptide repeat-containing protein At3g18020 (688 aa).

PPR repeat units follow at residues 53-88 (DRAY…GYRP), 89-123 (DSLN…GFIP), 124-158 (DERT…KKEF), 161-195 (SLTN…GHLP), 196-230 (DVVT…GIRP), 231-261 (NSLT…LWEY), 271-305 (KAAA…ESVN), 306-340 (VEFA…GLKP), 341-375 (RRTS…EFFP), 376-406 (SEYT…MLRK), 411-445 (RTRI…DCRP), 446-480 (DEYT…KFCA), 482-517 (DAVT…KIKP), 518-552 (GVVA…SVTA), 553-583 (DSTT…VIWP), 588-622 (DAFV…GAIP), and 623-657 (NVVC…GQAP).

It belongs to the PPR family. P subfamily.

This is Pentatricopeptide repeat-containing protein At3g18020 from Arabidopsis thaliana (Mouse-ear cress).